Reading from the N-terminus, the 345-residue chain is S-adenosylmethionine:tRNA ribosyltransferase-isomerase (345 aa).

This sequence belongs to the QueA family. In terms of assembly, monomer.

It is found in the cytoplasm. The enzyme catalyses 7-aminomethyl-7-carbaguanosine(34) in tRNA + S-adenosyl-L-methionine = epoxyqueuosine(34) in tRNA + adenine + L-methionine + 2 H(+). It participates in tRNA modification; tRNA-queuosine biosynthesis. Transfers and isomerizes the ribose moiety from AdoMet to the 7-aminomethyl group of 7-deazaguanine (preQ1-tRNA) to give epoxyqueuosine (oQ-tRNA). The chain is S-adenosylmethionine:tRNA ribosyltransferase-isomerase from Shewanella sp. (strain ANA-3).